We begin with the raw amino-acid sequence, 577 residues long: 2-succinyl-5-enolpyruvyl-6-hydroxy-3-cyclohexene-1-carboxylate synthase (577 aa).

It belongs to the TPP enzyme family. MenD subfamily. Homodimer. Mg(2+) serves as cofactor. It depends on Mn(2+) as a cofactor. Requires thiamine diphosphate as cofactor.

The catalysed reaction is isochorismate + 2-oxoglutarate + H(+) = 5-enolpyruvoyl-6-hydroxy-2-succinyl-cyclohex-3-ene-1-carboxylate + CO2. Its pathway is quinol/quinone metabolism; 1,4-dihydroxy-2-naphthoate biosynthesis; 1,4-dihydroxy-2-naphthoate from chorismate: step 2/7. The protein operates within quinol/quinone metabolism; menaquinone biosynthesis. In terms of biological role, catalyzes the thiamine diphosphate-dependent decarboxylation of 2-oxoglutarate and the subsequent addition of the resulting succinic semialdehyde-thiamine pyrophosphate anion to isochorismate to yield 2-succinyl-5-enolpyruvyl-6-hydroxy-3-cyclohexene-1-carboxylate (SEPHCHC). This is 2-succinyl-5-enolpyruvyl-6-hydroxy-3-cyclohexene-1-carboxylate synthase from Geobacillus kaustophilus (strain HTA426).